We begin with the raw amino-acid sequence, 520 residues long: MTALTVMVQGTASSVGKSLLCAALCRIFQRRGLRVAPFKSQNMALNSFATLDGGEIGRAQAVQAEAARVAPTVDMNPVLLKPEGDSRSQVIVLGKPIGSLHARDYFAYRGELKDIIARSLGRLREAHDVVVIEGAGSPAEINLKDRDIVNMHVARAADAPVLLAGDIDRGGVFAALVGTMALLEPDERARVAAFVINKFRGDLKLLEPGLDMLTARTGVPVLGVVPYLKQLRIADEDSVSLEGRRRRAPAGPGELDIAVVRLPRISNYDDVEPLEHEPGVVVRFIERPDEIGNADLVLLPGTKSTMADLAWLRASGLAEAVAARARQGGWTLGICGGCQMLGGAIEDPEGVESAEPAARGLGLLDVWTRFERTKTVAQVRARLAGGSFLGPAGAVNAGEAEGEGAGELTGYEIHMGRVERVGGAAAAFAIGSRGGKAEPALDGAVSADGAVVGTMIHGILDNDGLRRSLLAALRERRGLPRAAGEPAIPSRHEEYDRLANAVEASLDRALLDRIVGLDRR.

The GATase cobBQ-type domain maps to 254–465 (ELDIAVVRLP…IHGILDNDGL (212 aa)). Cys335 acts as the Nucleophile in catalysis. Residue His457 is part of the active site.

This sequence belongs to the CobB/CobQ family. CobQ subfamily.

It functions in the pathway cofactor biosynthesis; adenosylcobalamin biosynthesis. In terms of biological role, catalyzes amidations at positions B, D, E, and G on adenosylcobyrinic A,C-diamide. NH(2) groups are provided by glutamine, and one molecule of ATP is hydrogenolyzed for each amidation. In Sorangium cellulosum (strain So ce56) (Polyangium cellulosum (strain So ce56)), this protein is Cobyric acid synthase.